We begin with the raw amino-acid sequence, 1291 residues long: DNA-directed RNA polymerase subunit beta' (1291 aa).

Zn(2+)-binding residues include Cys60, Cys62, Cys75, and Cys78. Mg(2+) contacts are provided by Asp535, Asp537, and Asp539. The Zn(2+) site is built by Cys878, Cys954, Cys961, and Cys964.

This sequence belongs to the RNA polymerase beta' chain family. The RNAP catalytic core consists of 2 alpha, 1 beta, 1 beta' and 1 omega subunit. When a sigma factor is associated with the core the holoenzyme is formed, which can initiate transcription. Mg(2+) is required as a cofactor. Requires Zn(2+) as cofactor.

It carries out the reaction RNA(n) + a ribonucleoside 5'-triphosphate = RNA(n+1) + diphosphate. DNA-dependent RNA polymerase catalyzes the transcription of DNA into RNA using the four ribonucleoside triphosphates as substrates. The polypeptide is DNA-directed RNA polymerase subunit beta' (Thermobifida fusca (strain YX)).